The chain runs to 208 residues: Proteasome subunit beta 2 (208 aa).

Positions 1 to 9 are cleaved as a propeptide — removed in mature form; by autocatalysis; the sequence is MSGKKIVSK. Threonine 10 serves as the catalytic Nucleophile.

Belongs to the peptidase T1B family. In terms of assembly, the 20S proteasome core is composed of 14 alpha and 14 beta subunits that assemble into four stacked heptameric rings, resulting in a barrel-shaped structure. The two inner rings, each composed of seven catalytic beta subunits, are sandwiched by two outer rings, each composed of seven alpha subunits. The catalytic chamber with the active sites is on the inside of the barrel. Has a gated structure, the ends of the cylinder being occluded by the N-termini of the alpha-subunits. Is capped at one or both ends by the proteasome regulatory ATPase, PAN.

Its subcellular location is the cytoplasm. It catalyses the reaction Cleavage of peptide bonds with very broad specificity.. The formation of the proteasomal ATPase PAN-20S proteasome complex, via the docking of the C-termini of PAN into the intersubunit pockets in the alpha-rings, triggers opening of the gate for substrate entry. Interconversion between the open-gate and close-gate conformations leads to a dynamic regulation of the 20S proteasome proteolysis activity. Functionally, component of the proteasome core, a large protease complex with broad specificity involved in protein degradation. This Staphylothermus marinus (strain ATCC 43588 / DSM 3639 / JCM 9404 / F1) protein is Proteasome subunit beta 2.